Here is a 279-residue protein sequence, read N- to C-terminus: 4-diphosphocytidyl-2-C-methyl-D-erythritol kinase (279 aa).

Residue K11 is part of the active site. ATP is bound at residue P95–S105. D137 is an active-site residue.

It belongs to the GHMP kinase family. IspE subfamily.

It catalyses the reaction 4-CDP-2-C-methyl-D-erythritol + ATP = 4-CDP-2-C-methyl-D-erythritol 2-phosphate + ADP + H(+). It functions in the pathway isoprenoid biosynthesis; isopentenyl diphosphate biosynthesis via DXP pathway; isopentenyl diphosphate from 1-deoxy-D-xylulose 5-phosphate: step 3/6. In terms of biological role, catalyzes the phosphorylation of the position 2 hydroxy group of 4-diphosphocytidyl-2C-methyl-D-erythritol. The polypeptide is 4-diphosphocytidyl-2-C-methyl-D-erythritol kinase (Geobacter sulfurreducens (strain ATCC 51573 / DSM 12127 / PCA)).